Reading from the N-terminus, the 286-residue chain is 2-dehydro-3-deoxyphosphooctonate aldolase (286 aa).

It belongs to the KdsA family.

It localises to the cytoplasm. The enzyme catalyses D-arabinose 5-phosphate + phosphoenolpyruvate + H2O = 3-deoxy-alpha-D-manno-2-octulosonate-8-phosphate + phosphate. It participates in carbohydrate biosynthesis; 3-deoxy-D-manno-octulosonate biosynthesis; 3-deoxy-D-manno-octulosonate from D-ribulose 5-phosphate: step 2/3. Its pathway is bacterial outer membrane biogenesis; lipopolysaccharide biosynthesis. This chain is 2-dehydro-3-deoxyphosphooctonate aldolase, found in Shewanella denitrificans (strain OS217 / ATCC BAA-1090 / DSM 15013).